The following is a 389-amino-acid chain: Type II methyltransferase M1.ScrFI (389 aa).

An HTH cro/C1-type domain is found at 16–71 (IKEKRLRLNMTQKELADAVGMSKNGDRTIRRWENGETCPSQLEISAILRFPEIAPF). The 309-residue stretch at 79–387 (YKMIDLFAGI…EKMLEVLEKS (309 aa)) folds into the SAM-dependent MTase C5-type domain. The active site involves cysteine 149.

The protein belongs to the class I-like SAM-binding methyltransferase superfamily. C5-methyltransferase family.

The enzyme catalyses a 2'-deoxycytidine in DNA + S-adenosyl-L-methionine = a 5-methyl-2'-deoxycytidine in DNA + S-adenosyl-L-homocysteine + H(+). Its function is as follows. A methylase, recognizes the double-stranded sequence 5'-CCNGG-3', methylates C-2 on both strands, and protects the DNA from cleavage by the ScrFI endonuclease. This chain is Type II methyltransferase M1.ScrFI (scrFIAM), found in Lactococcus lactis subsp. cremoris (Streptococcus cremoris).